The following is a 260-amino-acid chain: BTB/POZ domain-containing protein KCTD21 (260 aa).

The region spanning 3–72 is the BTB domain; the sequence is DPITLNVGGK…LRTSHLDLPE (70 aa). The stretch at 88–112 forms a coiled coil; that stretch reads QVQPLIEALQEKEVELSKAEKNAML.

As to quaternary structure, homopentamer. Interacts with KCTD11; KCTD21 and KCTD11 may associate in pentameric assemblies. Interacts (via BTB domain) with CUL3; indicative for a participation in a BCR (BTB-CUL3-RBX1) E3 ubiquitin-protein ligase complex. Highly expressed in cerebellum and brain. Expressed in adult cerebellum (at protein level).

It functions in the pathway protein modification; protein ubiquitination. Probable substrate-specific adapter of a BCR (BTB-CUL3-RBX1) E3 ubiquitin-protein ligase complex mediating the ubiquitination and subsequent proteasomal degradation of target proteins. Promotes the ubiquitination of HDAC1. Can function as antagonist of the Hedgehog pathway by affecting the nuclear transfer of transcription factor GLI1; the function probably occurs via HDAC1 down-regulation, keeping GLI1 acetylated and inactive. Inhibits cell growth and tumorigenicity of medulloblastoma (MDB). In Mus musculus (Mouse), this protein is BTB/POZ domain-containing protein KCTD21 (Kctd21).